An 87-amino-acid chain; its full sequence is Small ribosomal subunit protein uS17 (87 aa).

It belongs to the universal ribosomal protein uS17 family. As to quaternary structure, part of the 30S ribosomal subunit.

Its function is as follows. One of the primary rRNA binding proteins, it binds specifically to the 5'-end of 16S ribosomal RNA. The chain is Small ribosomal subunit protein uS17 from Alkalilimnicola ehrlichii (strain ATCC BAA-1101 / DSM 17681 / MLHE-1).